A 1270-amino-acid polypeptide reads, in one-letter code: Vigilin (1270 aa).

The span at 1–11 shows a compositional bias: polar residues; that stretch reads MSSVAVLTQES. Disordered regions lie at residues 1–23 and 28–47; these read MSSV…TQQQ and ALNS…FPPL. KH domains follow at residues 150–188, 219–260, 291–333, 360–402, 431–473, 504–545, 577–619, 651–693, 724–766, 798–840, and 872–913; these read ASAT…IPRP, DKRA…IPPP, KKKT…IPPT, ANSF…EFTE, INRT…IPPD, ENER…NFPD, VENS…LPGR, ANIT…FPTE, QTKS…FPTS, DNVV…LPTV, and EAQV…FPDR. Residues 911 to 947 form a disordered region; sequence PDREENPAPVAEPALQENGEEGGEGKDGKDADPSSPR. The segment covering 933–947 has biased composition (basic and acidic residues); it reads GEGKDGKDADPSSPR. KH domains lie at 970–1012, 1051–1093, and 1126–1168; these read ALVP…VPAP, ALRS…FPDK, and LEQM…FPQS. The disordered stretch occupies residues 1217–1270; that stretch reads SHEESKVPSKGFVVRDAPCGTVNNEKAPDMSSSEDFPSFGAQVAPKTLPWGPKR.

It localises to the cytoplasm. The chain is Vigilin (HDLBP) from Gallus gallus (Chicken).